A 264-amino-acid polypeptide reads, in one-letter code: Apolipoprotein A-I (264 aa).

The N-terminal stretch at 1–18 is a signal peptide; it reads MKAVVLTVAVLFLTGSQA. A run of 2 repeats spans residues 67–88 and 89–110. Residues 67–264 are 10 X approximate tandem repeats; the sequence is LKLLDNWDSL…DEATKKLNTQ (198 aa). The residue at position 109 (M109) is a Methionine sulfoxide. The stretch at 111–121 is one 3; half-length repeat; that stretch reads KDLEEVKRKVQ. 3 tandem repeats follow at residues 122-143, 144-165, and 166-187. One copy of the 7; truncated repeat lies at 188–207; sequence PYSDELRQRLAARLEALKEG. Repeat unit 8 spans residues 208 to 229; sequence SSFAEYQAKATEHLSALGEKAK. The 9; half-length repeat unit spans residues 230–240; it reads PALEDLRQGLL. The stretch at 241–264 is repeat 10; the sequence is PVLESLKLSFWSAVDEATKKLNTQ.

It belongs to the apolipoprotein A1/A4/E family. As to quaternary structure, homodimer. Interacts with APOA1BP and CLU. Component of a sperm activating protein complex (SPAP), consisting of APOA1, an immunoglobulin heavy chain, an immunoglobulin light chain and albumin. Interacts with NDRG1. Interacts with SCGB3A2. Interacts with NAXE and YJEFN3. In terms of processing, glycosylated. Palmitoylated. Post-translationally, phosphorylation sites are present in the extracellular medium.

The protein localises to the secreted. Participates in the reverse transport of cholesterol from tissues to the liver for excretion by promoting cholesterol efflux from tissues and by acting as a cofactor for the lecithin cholesterol acyltransferase (LCAT). As part of the SPAP complex, activates spermatozoa motility. The sequence is that of Apolipoprotein A-I (APOA1) from Ictidomys tridecemlineatus (Thirteen-lined ground squirrel).